The chain runs to 114 residues: Hydrogenase maturation factor HypA (114 aa).

Histidine 2 contributes to the Ni(2+) binding site. The Zn(2+) site is built by cysteine 73, cysteine 76, cysteine 90, and cysteine 93.

It belongs to the HypA/HybF family.

Involved in the maturation of [NiFe] hydrogenases. Required for nickel insertion into the metal center of the hydrogenase. The protein is Hydrogenase maturation factor HypA of Chloroflexus aggregans (strain MD-66 / DSM 9485).